Consider the following 983-residue polypeptide: Protein translocase subunit SecA (983 aa).

ATP contacts are provided by residues Q83, 101-105, and D489; that span reads GEGKT. The tract at residues 948-983 is disordered; sequence ISSEEEDNNEKTNINNNEDLERTKGEAQQTAKNPNE. The span at 973 to 983 shows a compositional bias: polar residues; sequence EAQQTAKNPNE.

This sequence belongs to the SecA family. In terms of assembly, monomer and homodimer. Part of the essential Sec protein translocation apparatus which comprises SecA, SecYEG and auxiliary proteins SecDF. Other proteins may also be involved.

The protein localises to the cell membrane. The protein resides in the cytoplasm. The catalysed reaction is ATP + H2O + cellular proteinSide 1 = ADP + phosphate + cellular proteinSide 2.. Part of the Sec protein translocase complex. Interacts with the SecYEG preprotein conducting channel. Has a central role in coupling the hydrolysis of ATP to the transfer of proteins into and across the cell membrane, serving as an ATP-driven molecular motor driving the stepwise translocation of polypeptide chains across the membrane. This is Protein translocase subunit SecA from Mesomycoplasma hyopneumoniae (strain J / ATCC 25934 / NCTC 10110) (Mycoplasma hyopneumoniae).